Reading from the N-terminus, the 185-residue chain is Ribosome-recycling factor (185 aa).

The protein belongs to the RRF family.

The protein localises to the cytoplasm. Responsible for the release of ribosomes from messenger RNA at the termination of protein biosynthesis. May increase the efficiency of translation by recycling ribosomes from one round of translation to another. The polypeptide is Ribosome-recycling factor (Shewanella baltica (strain OS185)).